Consider the following 386-residue polypeptide: Alanine racemase (386 aa).

Lysine 38 acts as the Proton acceptor; specific for D-alanine in catalysis. Lysine 38 carries the post-translational modification N6-(pyridoxal phosphate)lysine. Arginine 136 lines the substrate pocket. Tyrosine 267 serves as the catalytic Proton acceptor; specific for L-alanine. Methionine 315 is a binding site for substrate.

This sequence belongs to the alanine racemase family. Pyridoxal 5'-phosphate is required as a cofactor.

The enzyme catalyses L-alanine = D-alanine. Its pathway is amino-acid biosynthesis; D-alanine biosynthesis; D-alanine from L-alanine: step 1/1. In terms of biological role, catalyzes the interconversion of L-alanine and D-alanine. May also act on other amino acids. In Clostridium perfringens (strain SM101 / Type A), this protein is Alanine racemase (alr).